Reading from the N-terminus, the 487-residue chain is NADH-quinone oxidoreductase subunit N (487 aa).

13 consecutive transmembrane segments (helical) span residues 7–27, 38–58, 79–99, 111–131, 164–184, 207–227, 238–258, 276–296, 301–321, 328–348, 373–393, 406–426, and 451–471; these read ILGP…LLMV, LVGL…GLGA, YAKA…MVWL, ILVL…DLIA, FVLG…VYGF, LLIG…AVPF, APTP…LTLF, VIIL…IVQT, LMAY…AAGT, VLVY…VILA, AAAM…AGFF, GLFA…FYYL, and VILI…SVVV.

The protein belongs to the complex I subunit 2 family. In terms of assembly, NDH-1 is composed of 14 different subunits. Subunits NuoA, H, J, K, L, M, N constitute the membrane sector of the complex.

The protein resides in the cell inner membrane. The enzyme catalyses a quinone + NADH + 5 H(+)(in) = a quinol + NAD(+) + 4 H(+)(out). In terms of biological role, NDH-1 shuttles electrons from NADH, via FMN and iron-sulfur (Fe-S) centers, to quinones in the respiratory chain. The immediate electron acceptor for the enzyme in this species is believed to be ubiquinone. Couples the redox reaction to proton translocation (for every two electrons transferred, four hydrogen ions are translocated across the cytoplasmic membrane), and thus conserves the redox energy in a proton gradient. This chain is NADH-quinone oxidoreductase subunit N, found in Rhodospirillum rubrum (strain ATCC 11170 / ATH 1.1.1 / DSM 467 / LMG 4362 / NCIMB 8255 / S1).